The sequence spans 338 residues: Anthocyanidin reductase ((2S)-flavan-3-ol-forming) (338 aa).

NADP(+) contacts are provided by residues 18-21, Lys-48, 87-90, and Tyr-168; these read TGFV and VATP.

This sequence belongs to the NAD(P)-dependent epimerase/dehydratase family. Dihydroflavonol-4-reductase subfamily. Expressed in seeds, grape skins, flowers and leaves.

It catalyses the reaction a (2S,3R)-flavan-3-ol + 2 NADP(+) = an anthocyanidin with a 3-hydroxy group + 2 NADPH + 2 H(+). The catalysed reaction is a (2S,3S)-flavan-3-ol + 2 NADP(+) = an anthocyanidin with a 3-hydroxy group + 2 NADPH + 2 H(+). The protein operates within secondary metabolite biosynthesis; flavonoid biosynthesis. Its activity is regulated as follows. Inhibited at NaCl concentrations higher than 200 mM. Functionally, produces the terminal flavan-3-ol monomers required for the formation of proanthocyanidins or condensed tannins in leaves and flowers, as well as in the skin and seeds of developing berries. Behaves as a reductase and as a C-3 epimerase. Catalyzes the double reduction of anthocyanidins, producing a mixture of (2S,3S)- and (2S,3R)-flavan-3-ols. The enzyme catalyzes sequential hydride transfers to C-2 and C-4, respectively and epimerization at C-3 is achieved by tautomerization that occurs between the two hydride transfers. Converts cyanidin, pelargonidin and delphinidin into catechin and epicatechin, afzelechin and epiafzelechin, and gallocatechin and epigallocatechin respectively. The protein is Anthocyanidin reductase ((2S)-flavan-3-ol-forming) of Vitis vinifera (Grape).